A 73-amino-acid polypeptide reads, in one-letter code: Omega-conotoxin GVIA (73 aa).

A signal peptide spans 1–22 (MKLTCVVIVAVLLLTACQLITA). Positions 23–45 (DDSRGTQKHRALGSTTELSLSTR) are excised as a propeptide. 3 cysteine pairs are disulfide-bonded: Cys-46/Cys-61, Cys-53/Cys-64, and Cys-60/Cys-71. 4-hydroxyproline occurs at positions 49, 55, and 66. Tyr-72 bears the Tyrosine amide; in form omega-conotoxin GVIA mark.

The protein belongs to the conotoxin O1 superfamily. Expressed by the venom duct.

Its subcellular location is the secreted. Omega-conotoxins act at presynaptic membranes, they bind and block voltage-gated calcium channels (Cav). This toxin blocks N-type calcium channels (Cav2.2/CACNA1B) with a high potency (it displaces [125I]GVIA with an IC(50)=3.7-38 pM). The protein is Omega-conotoxin GVIA of Conus geographus (Geography cone).